The primary structure comprises 337 residues: Viral cathepsin (337 aa).

The signal sequence occupies residues 1–16 (MNKILILLLLVSAVLT). Residues 17–126 (SHDQVVAVTI…VVDGPGQRQR (110 aa)) constitute a propeptide, activation peptide. 3 disulfides stabilise this stretch: cysteine 147–cysteine 188, cysteine 181–cysteine 221, and cysteine 276–cysteine 324. Residue cysteine 150 is part of the active site. Active-site residues include histidine 283 and asparagine 303.

It belongs to the peptidase C1 family. Synthesized as an inactive proenzyme and activated by proteolytic removal of the inhibitory propeptide.

The enzyme catalyses Endopeptidase of broad specificity, hydrolyzing substrates of both cathepsin L and cathepsin B.. Functionally, cysteine protease that plays an essential role in host liquefaction to facilitate horizontal transmission of the virus. May participate in the degradation of foreign protein expressed by the baculovirus system. This Mamestra configurata (bertha armyworm) protein is Viral cathepsin (VCATH).